The following is a 772-amino-acid chain: MQHTGNCETLIVNSCFGSTCARSIPVFIDSCDLTAEVSRDEETRLARSMPVVLEKIESIIEKIFQTSGPNIVHDKDRAKIALCRLLLGPVAVPCFCEEWDTNDYLSKSGCKCIGPILYIHTSRCRCSDIPVFKFSIMKDYYASHVFRGLLSLKEWNTHLPNVLCTCELSMSDRYVATVYPKQNSIYLEYYPYFLCYLCRHLTVIEIEQCTNDLISLLGPKVAQRVIIHFKLLFGFRHKPHIGTVDSWFWENFFMLELHKLWLTVVKHNRVTTDFFNVVYEKIQNYKQYAIKTLRMSSKAVPAIQRLCLAKFKQQLLYLNIKVTVKKNKREMCLNGFVYGKTLYVVESSQLIFRNLLLLYYDYSLPDECKTNEENVLTAHYIRVISRLSFKRSRSALPPGVRPDFIFVAQQPKRKELPNVPGGIDFAEITSVRHGAVTLNAFNTNKVMNLKATISKRANFVYHRIPKTMTHSFVMYKHTFKEPAFTVSTFVSNDDLDMSSLNINIRGPYCDFLYALGVYKMHVSIRDLFLPAFVCNSNNSVDLQGLENQDVVRNRKKKVYWITNFPCMISNANKVNVGWFKAGTGIIPRVSGEDLQNVLLQELNNVREIPGLVFDMDLHQLLVLLEQRNLHQIPFLVKQFLIFLRLGLLMGYGHSRRNKVHDIMLHLISNGLFDFNKNSVANTKIKHGCALVGTRLANNVPKIIARQKKMKLDHMGRNANSLAVLRFIVKSGEQKNKTVFIKLLEYLAETSTAINTRNEVARLLQTLTAKVKT.

Belongs to the herpesviridae UL87 family.

This chain is Protein U58 (U58), found in Homo sapiens (Human).